A 205-amino-acid polypeptide reads, in one-letter code: N-(5'-phosphoribosyl)anthranilate isomerase (205 aa).

The protein belongs to the TrpF family.

The catalysed reaction is N-(5-phospho-beta-D-ribosyl)anthranilate = 1-(2-carboxyphenylamino)-1-deoxy-D-ribulose 5-phosphate. It functions in the pathway amino-acid biosynthesis; L-tryptophan biosynthesis; L-tryptophan from chorismate: step 3/5. The sequence is that of N-(5'-phosphoribosyl)anthranilate isomerase from Phocaeicola vulgatus (strain ATCC 8482 / DSM 1447 / JCM 5826 / CCUG 4940 / NBRC 14291 / NCTC 11154) (Bacteroides vulgatus).